A 66-amino-acid polypeptide reads, in one-letter code: Beta-toxin Cbo2 (66 aa).

One can recognise an LCN-type CS-alpha/beta domain in the interval 1–66; the sequence is KEGYIVNYHD…VWPLPKKTCN (66 aa). Disulfide bonds link C12–C65, C16–C41, C25–C46, and C29–C48. Asparagine amide is present on N66.

It belongs to the long (4 C-C) scorpion toxin superfamily. Sodium channel inhibitor family. Beta subfamily. As to expression, expressed by the venom gland.

Its subcellular location is the secreted. In terms of biological role, beta toxins bind voltage-independently at site-4 of sodium channels and shift the voltage of activation toward more negative potentials thereby affecting sodium channel activation and promoting spontaneous and repetitive firing. A mixture of Cbo2 and Cbo3 is weakly active on the human voltage-gated sodium channels Nav1.4/SCN4A and Nav1.6/SCN8A when tested at 200 nM. In vivo, is toxic to mice when intraperitoneally injected. The sequence is that of Beta-toxin Cbo2 from Centruroides bonito (Scorpion).